The sequence spans 102 residues: Small ribosomal subunit protein uS10 (102 aa).

This sequence belongs to the universal ribosomal protein uS10 family. Part of the 30S ribosomal subunit.

In terms of biological role, involved in the binding of tRNA to the ribosomes. This is Small ribosomal subunit protein uS10 from Macrococcus caseolyticus (strain JCSC5402) (Macrococcoides caseolyticum).